The sequence spans 404 residues: Pyruvate-flavodoxin oxidoreductase (404 aa).

Belongs to the pyruvate:ferredoxin/flavodoxin oxidoreductase family.

The enzyme catalyses oxidized [flavodoxin] + pyruvate + CoA + 2 H(+) = reduced [flavodoxin] + acetyl-CoA + CO2. Functionally, oxidoreductase required for the transfer of electrons from pyruvate to flavodoxin, which reduces nitrogenase. The sequence is that of Pyruvate-flavodoxin oxidoreductase (nifJ) from Nostoc sp. (strain ATCC 29151 / PCC 7119) (Anabaena sp.).